Here is a 237-residue protein sequence, read N- to C-terminus: Oil body-associated protein 2C (237 aa).

It belongs to the OBAP family.

This chain is Oil body-associated protein 2C, found in Arabidopsis thaliana (Mouse-ear cress).